The chain runs to 862 residues: S-layer protein EA1 (862 aa).

An N-terminal signal peptide occupies residues M1–A29. SLH domains are found at residues A30 to P93, S94 to G151, and E152 to Q214.

It is found in the secreted. It localises to the cell wall. The protein localises to the S-layer. Functionally, the S-layer is a paracrystalline mono-layered assembly of proteins which coat the surface of bacteria. This Bacillus anthracis protein is S-layer protein EA1 (eag).